The chain runs to 567 residues: MEAERRPAPGSPSEGLFADGHLILWTLCSVLLPVFITFWCSLQRSRRQLHRRDIFRKSKHGWRDTDLFSQPTYCCVCAQHILQGAFCDCCGLRVDEGCLRKADKRFQCKEIMLKNDTKVLDAMPHHWIRGNVPLCSYCMVCKQQCGCQPKLCDYRCIWCQKTVHDECMKNSLKNEKCDFGEFKNLIIPPSYLTSINQMRKDKKTDYEVLASKLGKQWTPLIILANSRSGTNMGEGLLGEFRILLNPVQVFDVTKTPPIKALQLCTLLPYYSARVLVCGGDGTVGWVLDAVDDMKIKGQEKYIPQVAVLPLGTGNDLSNTLGWGTGYAGEIPVAQVLRNVMEADGIKLDRWKVQVTNKGYYNLRKPKEFTMNNYFSVGPDALMALNFHAHREKAPSLFSSRILNKAVYLFYGTKDCLVQECKDLNKKVELELDGERVALPSLEGIIVLNIGYWGGGCRLWEGMGDETYPLARHDDGLLEVVGVYGSFHCAQIQVKLANPFRIGQAHTVRLILKCSMMPMQVDGEPWAQGPCTVTITHKTHAMMLYFSGEQTDDDISSTSDQEDIKATE.

A helical transmembrane segment spans residues 22–42 (LILWTLCSVLLPVFITFWCSL). Phorbol-ester/DAG-type zinc fingers lie at residues 59–108 (KHGW…RFQC) and 124–177 (PHHW…NEKC). One can recognise a DAGKc domain in the interval 215 to 356 (KQWTPLIILA…LDRWKVQVTN (142 aa)).

Belongs to the eukaryotic diacylglycerol kinase family. Expressed predominantly in testis. Expressed in endothelium, platelets and podocytes (at protein level).

It localises to the membrane. Its subcellular location is the cytoplasm. The catalysed reaction is a 1,2-diacyl-sn-glycerol + ATP = a 1,2-diacyl-sn-glycero-3-phosphate + ADP + H(+). The enzyme catalyses 1-hexadecanoyl-2-(5Z,8Z,11Z,14Z-eicosatetraenoyl)-sn-glycerol + ATP = 1-hexadecanoyl-2-(5Z,8Z,11Z,14Z-eicosatetraenoyl)-sn-glycero-3-phosphate + ADP + H(+). It carries out the reaction 1-octadecanoyl-2-(5Z,8Z,11Z,14Z-eicosatetraenoyl)-sn-glycerol + ATP = 1-octadecanoyl-2-(5Z,8Z,11Z,14Z-eicosatetraenoyl)-sn-glycero-3-phosphate + ADP + H(+). It catalyses the reaction 1-eicosanoyl-2-(5Z,8Z,11Z,14Z)-eicosatetraenoyl-sn-glycerol + ATP = 1-eicosanoyl-2-(5Z,8Z,11Z,14Z)-eicosatetraenoyl-sn-glycero-3-phosphate + ADP + H(+). The catalysed reaction is 1,2-di-(5Z,8Z,11Z,14Z)-eicosatetraenoyl-sn-glycerol + ATP = 1,2-di-(5Z,8Z,11Z,14Z)-eicosatetraenoyl-sn-glycero-3-phosphate + ADP + H(+). The enzyme catalyses 1-octadecanoyl-2-(9Z,12Z)-octadecadienoyl-sn-glycerol + ATP = 1-octadecanoyl-2-(9Z,12Z-octadecadienoyl)-sn-glycero-3-phosphate + ADP + H(+). It carries out the reaction 1,2-di-(9Z,12Z-octadecadienoyl)-sn-glycerol + ATP = 1,2-di-(9Z,12Z-octadecadienoyl)-sn-glycero-3-phosphate + ADP + H(+). It catalyses the reaction 1,2-di-(9Z-octadecenoyl)-sn-glycerol + ATP = 1,2-di-(9Z-octadecenoyl)-sn-glycero-3-phosphate + ADP + H(+). It functions in the pathway lipid metabolism; glycerolipid metabolism. Undergoes competitive inhibition by its own product 1,2-diacyl-sn-glycero-3-phosphate/phosphatidic acid. The strongest inhibition being observed in vitro with 1-octadecanoyl-2-(5Z,8Z,11Z,14Z-eicosatetraenoyl)-sn-glycero-3-phosphate, a major intermediate in the phosphatidylinositol turnover cycle and more generally by diacylglycerols with an arachidonoyl acyl chain at the sn-2 position. Membrane-bound diacylglycerol kinase that converts diacylglycerol/DAG into phosphatidic acid/phosphatidate/PA and regulates the respective levels of these two bioactive lipids. Thereby, acts as a central switch between the signaling pathways activated by these second messengers with different cellular targets and opposite effects in numerous biological processes. Also plays an important role in the biosynthesis of complex lipids. Displays specificity for diacylglycerol substrates with an arachidonoyl acyl chain at the sn-2 position, with the highest activity toward 1-octadecanoyl-2-(5Z,8Z,11Z,14Z-eicosatetraenoyl)-sn-glycerol the main diacylglycerol intermediate within the phosphatidylinositol turnover cycle. Can also phosphorylate diacylglycerol substrates with a linoleoyl acyl chain at the sn-2 position but much less efficiently. This is Diacylglycerol kinase epsilon (DGKE) from Homo sapiens (Human).